A 331-amino-acid chain; its full sequence is Sideroflexin-5 (331 aa).

The next 4 membrane-spanning stretches (helical) occupy residues 104–126, 153–175, 243–265, and 278–300; these read PFGW…LLFW, YIGA…TYFI, TTMV…MPYL, and HIFV…ALAL.

Belongs to the sideroflexin family.

It localises to the mitochondrion inner membrane. The enzyme catalyses citrate(in) = citrate(out). Mitochondrial amino-acid transporter. In Caenorhabditis elegans, this protein is Sideroflexin-5.